The primary structure comprises 225 residues: Ribonuclease 3 (225 aa).

One can recognise an RNase III domain in the interval 7–129; the sequence is LPRLGRILGY…IIGAIYLDAD (123 aa). E42 provides a ligand contact to Mg(2+). Residue D46 is part of the active site. Positions 115 and 118 each coordinate Mg(2+). E118 is a catalytic residue. The 71-residue stretch at 155 to 225 folds into the DRBM domain; the sequence is DPKTLLQEHL…AAEVLERIKK (71 aa).

The protein belongs to the ribonuclease III family. As to quaternary structure, homodimer. It depends on Mg(2+) as a cofactor.

Its subcellular location is the cytoplasm. It catalyses the reaction Endonucleolytic cleavage to 5'-phosphomonoester.. In terms of biological role, digests double-stranded RNA. Involved in the processing of primary rRNA transcript to yield the immediate precursors to the large and small rRNAs (23S and 16S). Processes some mRNAs, and tRNAs when they are encoded in the rRNA operon. Processes pre-crRNA and tracrRNA of type II CRISPR loci if present in the organism. This Shewanella loihica (strain ATCC BAA-1088 / PV-4) protein is Ribonuclease 3.